A 232-amino-acid chain; its full sequence is Cytidylate kinase (232 aa).

Residues 1–21 (MSEDTPLVVAMDGPSGTGKSS) form a disordered region. Position 13–21 (13–21 (GPSGTGKSS)) interacts with ATP.

It belongs to the cytidylate kinase family. Type 1 subfamily.

It localises to the cytoplasm. It carries out the reaction CMP + ATP = CDP + ADP. The catalysed reaction is dCMP + ATP = dCDP + ADP. In Nocardia farcinica (strain IFM 10152), this protein is Cytidylate kinase.